The chain runs to 126 residues: Large ribosomal subunit protein uL22 (126 aa).

It belongs to the universal ribosomal protein uL22 family. Part of the 50S ribosomal subunit.

Its function is as follows. This protein binds specifically to 23S rRNA; its binding is stimulated by other ribosomal proteins, e.g. L4, L17, and L20. It is important during the early stages of 50S assembly. It makes multiple contacts with different domains of the 23S rRNA in the assembled 50S subunit and ribosome. The globular domain of the protein is located near the polypeptide exit tunnel on the outside of the subunit, while an extended beta-hairpin is found that lines the wall of the exit tunnel in the center of the 70S ribosome. The protein is Large ribosomal subunit protein uL22 of Jannaschia sp. (strain CCS1).